The sequence spans 80 residues: Small, acid-soluble spore protein Tlp (80 aa).

The protein belongs to the Tlp family.

The protein resides in the spore core. The sequence is that of Small, acid-soluble spore protein Tlp from Bacillus pumilus (strain SAFR-032).